The following is a 647-amino-acid chain: Beta-galactosidase (647 aa).

The N-terminal stretch at 1 to 24 (MLRVPLCTPLPLLALLQLLGAAHG) is a signal peptide. Positions 25-29 (IYNVT) are excised as a propeptide. Asn27 carries N-linked (GlcNAc...) asparagine glycosylation. Positions 84, 130, and 188 each coordinate substrate. Glu189 acts as the Proton donor in catalysis. Cys196 and Cys231 are oxidised to a cystine. Residue Asn248 is glycosylated (N-linked (GlcNAc...) asparagine). Glu269 acts as the Nucleophile in catalysis. Substrate is bound at residue Tyr334. N-linked (GlcNAc...) asparagine glycans are attached at residues Asn500, Asn504, Asn510, Asn544, Asn557, and Asn617. A disulfide bridge links Cys628 with Cys636.

This sequence belongs to the glycosyl hydrolase 35 family. In terms of assembly, homodimer. May form higher multimers.

It localises to the lysosome. It carries out the reaction Hydrolysis of terminal non-reducing beta-D-galactose residues in beta-D-galactosides.. Cleaves beta-linked terminal galactosyl residues from gangliosides, glycoproteins, and glycosaminoglycans. This Mus musculus (Mouse) protein is Beta-galactosidase (Glb1).